We begin with the raw amino-acid sequence, 228 residues long: Large ribosomal subunit protein bL25 (228 aa).

Positions 196–228 (EEAAVAEAQSAESAEGKAEAEAEATNEKNKSEA) are disordered. The span at 209-228 (AEGKAEAEAEATNEKNKSEA) shows a compositional bias: basic and acidic residues.

The protein belongs to the bacterial ribosomal protein bL25 family. CTC subfamily. In terms of assembly, part of the 50S ribosomal subunit; part of the 5S rRNA/L5/L18/L25 subcomplex. Contacts the 5S rRNA. Binds to the 5S rRNA independently of L5 and L18.

Functionally, this is one of the proteins that binds to the 5S RNA in the ribosome where it forms part of the central protuberance. This chain is Large ribosomal subunit protein bL25, found in Methylorubrum extorquens (strain PA1) (Methylobacterium extorquens).